The chain runs to 91 residues: UPF0728 protein v1g117062 (91 aa).

It belongs to the UPF0728 family.

This chain is UPF0728 protein v1g117062, found in Nematostella vectensis (Starlet sea anemone).